A 218-amino-acid polypeptide reads, in one-letter code: Elongation factor Ts (218 aa).

The involved in Mg(2+) ion dislocation from EF-Tu stretch occupies residues 82 to 85 (TDFV).

This sequence belongs to the EF-Ts family.

The protein localises to the cytoplasm. In terms of biological role, associates with the EF-Tu.GDP complex and induces the exchange of GDP to GTP. It remains bound to the aminoacyl-tRNA.EF-Tu.GTP complex up to the GTP hydrolysis stage on the ribosome. The polypeptide is Elongation factor Ts (Prochlorococcus marinus (strain MIT 9312)).